The following is a 575-amino-acid chain: Melatonin-related receptor (575 aa).

Residues 1-30 lie on the Extracellular side of the membrane; it reads MGRTLAVPTPYGCIGCKLPQPDYPPALIVF. Residues 31-51 form a helical membrane-spanning segment; the sequence is MFCAMVITIVVDLIGNSMVIL. Residues 52-64 are Cytoplasmic-facing; it reads AVSKNKKLRNSGN. The chain crosses the membrane as a helical span at residues 65 to 85; the sequence is VFVVSLSVADMLVAIYPYPLM. The Extracellular portion of the chain corresponds to 86-103; sequence LHAMAIGGWDLSKLQCQM. Residues cysteine 101 and cysteine 178 are joined by a disulfide bond. A helical transmembrane segment spans residues 104–124; sequence VGFITGLSVVGSIFNIMAIAI. Topologically, residues 125 to 143 are cytoplasmic; that stretch reads NRYCYICHSLQYERIFSVR. A helical membrane pass occupies residues 144–164; it reads NTCIYLAVTWIMTVLAVLPNM. At 165 to 188 the chain is on the extracellular side; that stretch reads YIGTIEYDPRTYTCIFNYVNNPAF. Residues 189-209 form a helical membrane-spanning segment; the sequence is AVTIVCIHFVLPLLIVGFCYV. Over 210–239 the chain is Cytoplasmic; that stretch reads KIWTKVLAARDPAGQNPDNQLAEVRNFLTM. Residues 240–260 traverse the membrane as a helical segment; it reads FVIFLLFAVCWCPINALTVLV. Residues 261 to 273 lie on the Extracellular side of the membrane; sequence AVNPKEMAGKIPN. The chain crosses the membrane as a helical span at residues 274–294; that stretch reads WVYLAAYFIAYFNSCLNAVIY. At 295–575 the chain is on the cytoplasmic side; sequence GVLNENFRRE…VDADSDEMAV (281 aa). Disordered regions lie at residues 368-421 and 446-474; these read VPLP…TVYP and SSHPKPITGPSKTAISPATSFPKPTTGYT. Residues 455–474 are compositionally biased toward polar residues; it reads PSKTAISPATSFPKPTTGYT.

The protein belongs to the G-protein coupled receptor 1 family. Homodimer, and heterodimer with MTNR1A and MTNR1B. Interacts with KAT5. Interacts with RTN4 isoform A/NOGO-A. Interacts with TGFBR1.

The protein localises to the cell membrane. Its function is as follows. G protein-coupled receptor that plays a role in numerous physiological processes including regulation of energy metabolism, neurite outgrowth or cell migration. Promotes self-renewal and neuronal differentiation of neural progenitor cells through activation of the NOTCH and WNT/beta-catenin signaling pathways. Modulates the KAT5-dependent glucocorticoid receptor signaling by modulating KAT5 subcellular compartmentalisation. Also plays a role in the activation TGFBR1 in the absence of TGFBR2 by interfering with FKBP1A binding to TGFBR1, leading to induction of both canonical and non-canonical SMAD signaling pathways resulting in inhibition of proliferation or promotion of migration. The sequence is that of Melatonin-related receptor (GPR50) from Ovis aries (Sheep).